The sequence spans 222 residues: Glutathione S-transferase A4 (222 aa).

N-acetylmethionine is present on M1. A GST N-terminal domain is found at 3–83; the sequence is AKPKLYYFNG…YLAAKYNLYG (81 aa). Glutathione-binding positions include Y9, 53 to 55, and 66 to 68; these read GQV and TQT. The region spanning 85–208 is the GST C-terminal domain; the sequence is DLKERVRIDM…QPGSQRKPPP (124 aa).

The protein belongs to the GST superfamily. Alpha family. Homodimer. Post-translationally, the N-terminus is blocked.

Its subcellular location is the cytoplasm. It carries out the reaction RX + glutathione = an S-substituted glutathione + a halide anion + H(+). Functionally, conjugation of reduced glutathione to a wide number of exogenous and endogenous hydrophobic electrophiles. The chain is Glutathione S-transferase A4 (Gsta4) from Mus musculus (Mouse).